The primary structure comprises 181 residues: Acireductone dioxygenase (181 aa).

Fe(2+)-binding residues include histidine 97, histidine 99, glutamate 103, and histidine 141. Residues histidine 97, histidine 99, glutamate 103, and histidine 141 each coordinate Ni(2+).

The protein belongs to the acireductone dioxygenase (ARD) family. In terms of assembly, monomer. Fe(2+) is required as a cofactor. The cofactor is Ni(2+).

The enzyme catalyses 1,2-dihydroxy-5-(methylsulfanyl)pent-1-en-3-one + O2 = 3-(methylsulfanyl)propanoate + CO + formate + 2 H(+). It carries out the reaction 1,2-dihydroxy-5-(methylsulfanyl)pent-1-en-3-one + O2 = 4-methylsulfanyl-2-oxobutanoate + formate + 2 H(+). The protein operates within amino-acid biosynthesis; L-methionine biosynthesis via salvage pathway; L-methionine from S-methyl-5-thio-alpha-D-ribose 1-phosphate: step 5/6. Functionally, catalyzes 2 different reactions between oxygen and the acireductone 1,2-dihydroxy-3-keto-5-methylthiopentene (DHK-MTPene) depending upon the metal bound in the active site. Fe-containing acireductone dioxygenase (Fe-ARD) produces formate and 2-keto-4-methylthiobutyrate (KMTB), the alpha-ketoacid precursor of methionine in the methionine recycle pathway. Ni-containing acireductone dioxygenase (Ni-ARD) produces methylthiopropionate, carbon monoxide and formate, and does not lie on the methionine recycle pathway. This is Acireductone dioxygenase from Stutzerimonas stutzeri (strain A1501) (Pseudomonas stutzeri).